The sequence spans 467 residues: Phosphoglucosamine mutase (467 aa).

Serine 120 (phosphoserine intermediate) is an active-site residue. The Mg(2+) site is built by serine 120, aspartate 261, aspartate 263, and aspartate 265. A Phosphoserine modification is found at serine 120.

Belongs to the phosphohexose mutase family. Mg(2+) is required as a cofactor. Activated by phosphorylation.

It carries out the reaction alpha-D-glucosamine 1-phosphate = D-glucosamine 6-phosphate. Its function is as follows. Catalyzes the conversion of glucosamine-6-phosphate to glucosamine-1-phosphate. The sequence is that of Phosphoglucosamine mutase from Parafrankia sp. (strain EAN1pec).